A 160-amino-acid polypeptide reads, in one-letter code: 6,7-dimethyl-8-ribityllumazine synthase (160 aa).

5-amino-6-(D-ribitylamino)uracil is bound by residues Trp-27, 59 to 61 (AIE), and 81 to 83 (VVI). Residue 86–87 (QT) participates in (2S)-2-hydroxy-3-oxobutyl phosphate binding. His-89 serves as the catalytic Proton donor. Asn-114 lines the 5-amino-6-(D-ribitylamino)uracil pocket. Arg-128 lines the (2S)-2-hydroxy-3-oxobutyl phosphate pocket.

It belongs to the DMRL synthase family. In terms of assembly, homopentamer.

It catalyses the reaction (2S)-2-hydroxy-3-oxobutyl phosphate + 5-amino-6-(D-ribitylamino)uracil = 6,7-dimethyl-8-(1-D-ribityl)lumazine + phosphate + 2 H2O + H(+). Its pathway is cofactor biosynthesis; riboflavin biosynthesis; riboflavin from 2-hydroxy-3-oxobutyl phosphate and 5-amino-6-(D-ribitylamino)uracil: step 1/2. Catalyzes the formation of 6,7-dimethyl-8-ribityllumazine by condensation of 5-amino-6-(D-ribitylamino)uracil with 3,4-dihydroxy-2-butanone 4-phosphate. This is the penultimate step in the biosynthesis of riboflavin. The chain is 6,7-dimethyl-8-ribityllumazine synthase from Mycobacterium sp. (strain JLS).